Here is a 969-residue protein sequence, read N- to C-terminus: Levansucrase (969 aa).

The signal sequence occupies residues 1 to 52; it reads MDITVNSQSNTVAPKQAECKKMRYSIRKVATVGATSALVGTLAFLGATQVKA. The segment covering 89 to 103 has biased composition (low complexity); sequence SEAVESSVAHSEVAT. Residues 89 to 169 are disordered; it reads SEAVESSVAH…STASSEAADT (81 aa). The span at 106 to 116 shows a compositional bias: polar residues; that stretch reads VTETQPSNTTP. The segment covering 124 to 166 has biased composition (low complexity); sequence SSTVVTSSSDATTPSATVAAVSAPAHTSEAAVEAPTSTASSEA. Sucrose is bound by residues tryptophan 286, aspartate 287, and serine 356. The active-site Nucleophile is aspartate 287. Position 443 (aspartate 443) interacts with Ca(2+). 2 residues coordinate sucrose: arginine 448 and aspartate 449. Positions 473, 512, and 544 each coordinate Ca(2+). Glutamate 545 serves as a coordination point for sucrose. The active-site Proton donor/acceptor is glutamate 547. Arginine 565 serves as a coordination point for sucrose. Disordered regions lie at residues 746 to 843 and 860 to 934; these read VKDG…VGDR and IVAT…SEGS. Positions 747-758 are enriched in basic and acidic residues; it reads KDGKDKKADKPE. Residues 776 to 789 show a composition bias toward polar residues; it reads KPGTSKPADNNQPS. Over residues 872 to 910 the composition is skewed to basic and acidic residues; sequence VKEESVTETEAPKPVKSEEKVQSHGVDKANEVTKSDESS. Polar residues predominate over residues 924–934; that stretch reads TPKTPSDSEGS. A helical membrane pass occupies residues 938-958; it reads ILSILATIFAAIASLALLGYG.

This sequence belongs to the glycosyl hydrolase 68 family.

It is found in the cell membrane. Its subcellular location is the cell surface. It carries out the reaction [6)-beta-D-fructofuranosyl-(2-&gt;](n) alpha-D-glucopyranoside + sucrose = [6)-beta-D-fructofuranosyl-(2-&gt;](n+1) alpha-D-glucopyranoside + D-glucose. Ca(2+) may play an important structural role and promote stability of levansucrase. Catalyzes the synthesis of levan, a fructose polymer, by transferring the fructosyl moiety from sucrose to a growing acceptor molecule. Also displays sucrose hydrolase activity. The polypeptide is Levansucrase (Streptococcus salivarius).